The sequence spans 242 residues: Large ribosomal subunit protein uL1 (242 aa).

Belongs to the universal ribosomal protein uL1 family. Part of the 50S ribosomal subunit.

In terms of biological role, binds directly to 23S rRNA. The L1 stalk is quite mobile in the ribosome, and is involved in E site tRNA release. Functionally, protein L1 is also a translational repressor protein, it controls the translation of the L11 operon by binding to its mRNA. This chain is Large ribosomal subunit protein uL1, found in Persephonella marina (strain DSM 14350 / EX-H1).